The sequence spans 449 residues: Ribulose bisphosphate carboxylase large chain (449 aa).

N6,N6,N6-trimethyllysine is present on K7. Substrate is bound by residues N116 and T166. The Proton acceptor role is filled by K168. K170 lines the substrate pocket. Residues K194, D196, and E197 each coordinate Mg(2+). K194 is subject to N6-carboxylysine. H287 (proton acceptor) is an active-site residue. The substrate site is built by R288, H320, and S372.

This sequence belongs to the RuBisCO large chain family. Type I subfamily. As to quaternary structure, heterohexadecamer of 8 large chains and 8 small chains; disulfide-linked. The disulfide link is formed within the large subunit homodimers. It depends on Mg(2+) as a cofactor. Post-translationally, the disulfide bond which can form in the large chain dimeric partners within the hexadecamer appears to be associated with oxidative stress and protein turnover.

The protein resides in the plastid. The protein localises to the chloroplast. The enzyme catalyses 2 (2R)-3-phosphoglycerate + 2 H(+) = D-ribulose 1,5-bisphosphate + CO2 + H2O. The catalysed reaction is D-ribulose 1,5-bisphosphate + O2 = 2-phosphoglycolate + (2R)-3-phosphoglycerate + 2 H(+). RuBisCO catalyzes two reactions: the carboxylation of D-ribulose 1,5-bisphosphate, the primary event in carbon dioxide fixation, as well as the oxidative fragmentation of the pentose substrate in the photorespiration process. Both reactions occur simultaneously and in competition at the same active site. This Aspidistra elatior (Cast-iron plant) protein is Ribulose bisphosphate carboxylase large chain.